Reading from the N-terminus, the 301-residue chain is RNA polymerase II holoenzyme cyclin-like subunit (301 aa).

The region spanning 53-142 is the Cyclin N-terminal domain; it reads QQLIKLGKRT…LGECEFALIS (90 aa).

It belongs to the cyclin family. Cyclin C subfamily. As to quaternary structure, component of the srb8-11 complex, a regulatory module of the Mediator complex.

The protein localises to the nucleus. Component of the srb8-11 complex. The srb8-11 complex is a regulatory module of the Mediator complex which is itself involved in regulation of basal and activated RNA polymerase II-dependent transcription. The srb8-11 complex may be involved in the transcriptional repression of a subset of genes regulated by Mediator. It may inhibit the association of the Mediator complex with RNA polymerase II to form the holoenzyme complex. The srb8-11 complex phosphorylates the C-terminal domain (CTD) of the largest subunit of RNA polymerase II. This Aspergillus terreus (strain NIH 2624 / FGSC A1156) protein is RNA polymerase II holoenzyme cyclin-like subunit (ssn8).